A 155-amino-acid chain; its full sequence is Myosin light chain alkali (155 aa).

2 EF-hand domains span residues 7–41 (REIE…LNLN) and 80–115 (GCYE…LGES).

As to quaternary structure, myosin is a hexamer of 2 heavy chains and 4 light chains.

In Drosophila pseudoobscura pseudoobscura (Fruit fly), this protein is Myosin light chain alkali (Mlc1).